Reading from the N-terminus, the 473-residue chain is H(+)/Cl(-) exchange transporter ClcA (473 aa).

The Cytoplasmic portion of the chain corresponds to 1 to 32 (MKTDTPSLETPQAARLRRRQLIRQLLERDKTP). Residues 33–69 (LAILFMAAVVGTLVGLAAVAFDKGVAWLQNQRMGALV) traverse the membrane as a helical segment. Residues 70–76 (HTADNYP) lie on the Periplasmic side of the membrane. Residues 77-100 (LLLTVAFLCSAVLAMFGYFLVRKY) traverse the membrane as a helical segment. Positions 106 to 110 (GSGIP) match the Selectivity filter part_1 motif. S107 contacts chloride. Residues 109–116 (IPEIEGAL) constitute an intramembrane region (helical). The Cytoplasmic portion of the chain corresponds to 117-123 (EDQRPVR). 2 helical membrane passes run 124–141 (WWRV…TLGG) and 148–166 (EGPT…LDIF). Positions 146-150 (GREGP) match the Selectivity filter part_2 motif. The Cytoplasmic portion of the chain corresponds to 167-176 (RLKGDEARHT). 2 consecutive intramembrane regions (helical) follow at residues 177–189 (LLAT…LAAA) and 193–201 (PLAGILFII). Over 202–214 (EEMRPQFRYTLIS) the chain is Cytoplasmic. The helical transmembrane segment at 215–232 (IKAVFIGVIMSTIMYRIF) threads the bilayer. Over 233–252 (NHEVALIDVGKLSDAPLNTL) the chain is Periplasmic. A helical membrane pass occupies residues 253–281 (WLYLILGIIFGIFGPIFNKWVLGMQDLLH). The Cytoplasmic segment spans residues 282–287 (RVHGGN). The chain crosses the membrane as a helical span at residues 288–309 (ITKWVLMGGAIGGLCGLLGFVA). The Periplasmic segment spans residues 310–329 (PATSGGGFNLIPIATAGNFS). Transmembrane regions (helical) follow at residues 330–349 (MGML…LCFS) and 355–376 (GIFA…MVAV). The Selectivity filter part_3 signature appears at 355-359 (GIFAP). The chloride site is built by I356 and F357. The Periplasmic segment spans residues 377 to 386 (ELFPQYHLEA). An intramembrane region (helical) is located at residues 387–401 (GTFAIAGMGALLAAS). Positions 402-404 (IRA) form an intramembrane region, note=Loop between two helices. Residues 405-416 (PLTGIILVLEMT) constitute an intramembrane region (helical). Positions 417–421 (DNYQL) form an intramembrane region, note=Loop between two helices. A helical transmembrane segment spans residues 422 to 438 (ILPMIITGLGATLLAQF). Residues 439 to 473 (TGGKPLYSAILARTLAKQEAEQLARSKAASASENT) lie on the Cytoplasmic side of the membrane. A chloride-binding site is contributed by Y445.

This sequence belongs to the chloride channel (TC 2.A.49) family. ClcA subfamily. In terms of assembly, homodimer.

Its subcellular location is the cell inner membrane. The enzyme catalyses 2 chloride(in) + H(+)(out) = 2 chloride(out) + H(+)(in). Functionally, proton-coupled chloride transporter. Functions as antiport system and exchanges two chloride ions for 1 proton. Probably acts as an electrical shunt for an outwardly-directed proton pump that is linked to amino acid decarboxylation, as part of the extreme acid resistance (XAR) response. This Shigella flexneri serotype 5b (strain 8401) protein is H(+)/Cl(-) exchange transporter ClcA.